The primary structure comprises 547 residues: Chaperonin GroEL (547 aa).

Residues 30–33, lysine 51, 87–91, glycine 415, and aspartate 496 each bind ATP; these read TLGP and DGTTT.

Belongs to the chaperonin (HSP60) family. In terms of assembly, forms a cylinder of 14 subunits composed of two heptameric rings stacked back-to-back. Interacts with the co-chaperonin GroES.

It is found in the cytoplasm. It carries out the reaction ATP + H2O + a folded polypeptide = ADP + phosphate + an unfolded polypeptide.. In terms of biological role, together with its co-chaperonin GroES, plays an essential role in assisting protein folding. The GroEL-GroES system forms a nano-cage that allows encapsulation of the non-native substrate proteins and provides a physical environment optimized to promote and accelerate protein folding. This Actinobacillus pleuropneumoniae serotype 7 (strain AP76) protein is Chaperonin GroEL.